The chain runs to 308 residues: Ribonuclease Z (308 aa).

Residues His60, His62, Asp64, His65, His140, Asp209, and His269 each coordinate Zn(2+). Catalysis depends on Asp64, which acts as the Proton acceptor.

The protein belongs to the RNase Z family. In terms of assembly, homodimer. Requires Zn(2+) as cofactor.

It catalyses the reaction Endonucleolytic cleavage of RNA, removing extra 3' nucleotides from tRNA precursor, generating 3' termini of tRNAs. A 3'-hydroxy group is left at the tRNA terminus and a 5'-phosphoryl group is left at the trailer molecule.. Its function is as follows. Zinc phosphodiesterase, which displays some tRNA 3'-processing endonuclease activity. Probably involved in tRNA maturation, by removing a 3'-trailer from precursor tRNA. The polypeptide is Ribonuclease Z (Methanococcus maripaludis (strain C6 / ATCC BAA-1332)).